The following is a 108-amino-acid chain: Small ribosomal subunit protein eS25x (108 aa).

The interval 1–36 is disordered; that stretch reads MAPKKDKVPPPSSKPAKSGGGKQKKKKWSKGKQKEK. A compositionally biased stretch (basic residues) spans 22–31; that stretch reads KQKKKKWSKG.

Belongs to the eukaryotic ribosomal protein eS25 family.

The protein is Small ribosomal subunit protein eS25x (RPS25D) of Arabidopsis thaliana (Mouse-ear cress).